An 84-amino-acid chain; its full sequence is Putative antitoxin RelB4 (84 aa).

Its function is as follows. Antitoxin component of a type II toxin-antitoxin (TA) system. Its cognate toxin is RelE4 (Potential). In Methanocaldococcus jannaschii (strain ATCC 43067 / DSM 2661 / JAL-1 / JCM 10045 / NBRC 100440) (Methanococcus jannaschii), this protein is Putative antitoxin RelB4 (relB4).